Consider the following 206-residue polypeptide: Large ribosomal subunit protein uL4 (206 aa).

This sequence belongs to the universal ribosomal protein uL4 family. In terms of assembly, part of the 50S ribosomal subunit.

Functionally, one of the primary rRNA binding proteins, this protein initially binds near the 5'-end of the 23S rRNA. It is important during the early stages of 50S assembly. It makes multiple contacts with different domains of the 23S rRNA in the assembled 50S subunit and ribosome. Its function is as follows. Forms part of the polypeptide exit tunnel. This Methylorubrum extorquens (strain CM4 / NCIMB 13688) (Methylobacterium extorquens) protein is Large ribosomal subunit protein uL4.